A 59-amino-acid chain; its full sequence is U-scoloptoxin(23)-Er2a (59 aa).

The protein belongs to the scoloptoxin-23 family. In terms of processing, contains 1 disulfide bond. As to expression, expressed by the venom gland.

The protein localises to the secreted. The chain is U-scoloptoxin(23)-Er2a from Ethmostigmus rubripes (Giant centipede).